The following is a 497-amino-acid chain: Glucose-6-phosphate 1-dehydrogenase (497 aa).

Residues 17 to 24 (GASGDLAK), Arg51, and Lys151 contribute to the NADP(+) site. D-glucose 6-phosphate contacts are provided by residues Lys151, 181–185 (HYLGK), Glu219, and Asp238. Catalysis depends on His243, which acts as the Proton acceptor. Lys334 serves as a coordination point for NADP(+). Residues Lys337 and Arg342 each coordinate D-glucose 6-phosphate. NADP(+)-binding residues include Lys343, Arg347, and Arg371. Gln373 is a binding site for D-glucose 6-phosphate. NADP(+) is bound by residues 379–381 (YLK), 399–401 (DLS), Arg465, and Trp487.

Belongs to the glucose-6-phosphate dehydrogenase family.

The protein localises to the cytoplasm. Its subcellular location is the cytosol. It catalyses the reaction D-glucose 6-phosphate + NADP(+) = 6-phospho-D-glucono-1,5-lactone + NADPH + H(+). It participates in carbohydrate degradation; pentose phosphate pathway; D-ribulose 5-phosphate from D-glucose 6-phosphate (oxidative stage): step 1/3. Functionally, cytosolic glucose-6-phosphate dehydrogenase that catalyzes the first and rate-limiting step of the oxidative branch within the pentose phosphate pathway/shunt, an alternative route to glycolysis for the dissimilation of carbohydrates and a major source of reducing power and metabolic intermediates for fatty acid and nucleic acid biosynthetic processes. The chain is Glucose-6-phosphate 1-dehydrogenase (g6pd-1) from Dictyostelium discoideum (Social amoeba).